Consider the following 253-residue polypeptide: Tryptophan synthase alpha chain (253 aa).

Residues Glu47 and Asp58 each act as proton acceptor in the active site.

The protein belongs to the TrpA family. In terms of assembly, tetramer of two alpha and two beta chains.

The catalysed reaction is (1S,2R)-1-C-(indol-3-yl)glycerol 3-phosphate + L-serine = D-glyceraldehyde 3-phosphate + L-tryptophan + H2O. Its pathway is amino-acid biosynthesis; L-tryptophan biosynthesis; L-tryptophan from chorismate: step 5/5. Its function is as follows. The alpha subunit is responsible for the aldol cleavage of indoleglycerol phosphate to indole and glyceraldehyde 3-phosphate. The sequence is that of Tryptophan synthase alpha chain from Lactococcus lactis subsp. cremoris (strain MG1363).